The sequence spans 102 residues: Nucleoid-associated protein BCc_301 (102 aa).

It belongs to the YbaB/EbfC family. As to quaternary structure, homodimer.

The protein localises to the cytoplasm. It is found in the nucleoid. Functionally, binds to DNA and alters its conformation. May be involved in regulation of gene expression, nucleoid organization and DNA protection. This chain is Nucleoid-associated protein BCc_301, found in Buchnera aphidicola subsp. Cinara cedri (strain Cc).